Here is a 606-residue protein sequence, read N- to C-terminus: NADH-ubiquinone oxidoreductase chain 5 (606 aa).

The next 16 helical transmembrane spans lie at 3–23 (LFTS…LMSL), 35–55 (YVKT…LIFI), 87–107 (MIFT…SMWY), 117–137 (FFKY…ANNL), 140–160 (LFIG…WWYG), 171–191 (AILY…WFLF), 211–233 (LPLL…HPWL), 241–261 (TPVS…FLLI), 273–293 (MQTL…ICAL), 301–320 (IIAF…IGIN), 325–347 (AFLH…GSII), 366–386 (LPFT…TPFL), 402–422 (SYTN…TAVY), 457–477 (LLIG…PMTI), 488–508 (LTAL…SLMT), and 582–602 (GLIK…MLLF).

Belongs to the complex I subunit 5 family. As to quaternary structure, core subunit of respiratory chain NADH dehydrogenase (Complex I) which is composed of 45 different subunits.

It is found in the mitochondrion inner membrane. It carries out the reaction a ubiquinone + NADH + 5 H(+)(in) = a ubiquinol + NAD(+) + 4 H(+)(out). Core subunit of the mitochondrial membrane respiratory chain NADH dehydrogenase (Complex I) which catalyzes electron transfer from NADH through the respiratory chain, using ubiquinone as an electron acceptor. Essential for the catalytic activity and assembly of complex I. In Pseudosoriculus fumidus (Taiwanese brown-toothed shrew), this protein is NADH-ubiquinone oxidoreductase chain 5 (MT-ND5).